Here is a 304-residue protein sequence, read N- to C-terminus: UDP-3-O-acyl-N-acetylglucosamine deacetylase (304 aa).

Residues H78, H237, and D241 each contribute to the Zn(2+) site. Residue H264 is the Proton donor of the active site.

Belongs to the LpxC family. Requires Zn(2+) as cofactor.

It carries out the reaction a UDP-3-O-[(3R)-3-hydroxyacyl]-N-acetyl-alpha-D-glucosamine + H2O = a UDP-3-O-[(3R)-3-hydroxyacyl]-alpha-D-glucosamine + acetate. Its pathway is glycolipid biosynthesis; lipid IV(A) biosynthesis; lipid IV(A) from (3R)-3-hydroxytetradecanoyl-[acyl-carrier-protein] and UDP-N-acetyl-alpha-D-glucosamine: step 2/6. Its function is as follows. Catalyzes the hydrolysis of UDP-3-O-myristoyl-N-acetylglucosamine to form UDP-3-O-myristoylglucosamine and acetate, the committed step in lipid A biosynthesis. This Alcanivorax borkumensis (strain ATCC 700651 / DSM 11573 / NCIMB 13689 / SK2) protein is UDP-3-O-acyl-N-acetylglucosamine deacetylase.